The chain runs to 424 residues: Glucan endo-1,3-alpha-glucosidase agn1 (424 aa).

The first 20 residues, 1–20 (MKLVLFLVLLFSALINLTNA), serve as a signal peptide directing secretion.

It belongs to the glycosyl hydrolase 71 family. In terms of assembly, monomer. Not glycosylated.

It is found in the secreted. It localises to the cell wall. It catalyses the reaction Endohydrolysis of (1-&gt;3)-alpha-D-glucosidic linkages in isolichenin, pseudonigeran and nigeran.. In terms of biological role, has a role in cell separation where it is required for the degradation of the cell wall material surrounding the septum (the septum edging) which must be hydrolyzed before full separation of the daughter cells can occur. Hydrolyzes 1,3-alpha-glucan predominantly into pentasaccharides. This chain is Glucan endo-1,3-alpha-glucosidase agn1 (agn1), found in Schizosaccharomyces pombe (strain 972 / ATCC 24843) (Fission yeast).